Consider the following 158-residue polypeptide: NAD(P)H-quinone oxidoreductase subunit J, chloroplastic (158 aa).

This sequence belongs to the complex I 30 kDa subunit family. NDH is composed of at least 16 different subunits, 5 of which are encoded in the nucleus.

The protein resides in the plastid. Its subcellular location is the chloroplast thylakoid membrane. It catalyses the reaction a plastoquinone + NADH + (n+1) H(+)(in) = a plastoquinol + NAD(+) + n H(+)(out). The enzyme catalyses a plastoquinone + NADPH + (n+1) H(+)(in) = a plastoquinol + NADP(+) + n H(+)(out). In terms of biological role, NDH shuttles electrons from NAD(P)H:plastoquinone, via FMN and iron-sulfur (Fe-S) centers, to quinones in the photosynthetic chain and possibly in a chloroplast respiratory chain. The immediate electron acceptor for the enzyme in this species is believed to be plastoquinone. Couples the redox reaction to proton translocation, and thus conserves the redox energy in a proton gradient. This Aethionema cordifolium (Lebanon stonecress) protein is NAD(P)H-quinone oxidoreductase subunit J, chloroplastic.